Reading from the N-terminus, the 131-residue chain is Holo-[acyl-carrier-protein] synthase (131 aa).

Residues D8 and E62 each coordinate Mg(2+).

This sequence belongs to the P-Pant transferase superfamily. AcpS family. The cofactor is Mg(2+).

The protein resides in the cytoplasm. It carries out the reaction apo-[ACP] + CoA = holo-[ACP] + adenosine 3',5'-bisphosphate + H(+). Functionally, transfers the 4'-phosphopantetheine moiety from coenzyme A to a Ser of acyl-carrier-protein. The chain is Holo-[acyl-carrier-protein] synthase from Delftia acidovorans (strain DSM 14801 / SPH-1).